The sequence spans 119 residues: Fluoride-specific ion channel FluC (119 aa).

The next 4 membrane-spanning stretches (helical) occupy residues 5–25, 34–54, 59–79, and 97–117; these read IIPL…LNLA, TGNL…AETI, WKLL…GFSL, and IFLH…IGAA. 2 residues coordinate Na(+): G69 and T72.

This sequence belongs to the fluoride channel Fluc/FEX (TC 1.A.43) family.

It is found in the cell inner membrane. It carries out the reaction fluoride(in) = fluoride(out). Its activity is regulated as follows. Na(+) is not transported, but it plays an essential structural role and its presence is essential for fluoride channel function. Functionally, fluoride-specific ion channel. Important for reducing fluoride concentration in the cell, thus reducing its toxicity. In Neisseria meningitidis serogroup C / serotype 2a (strain ATCC 700532 / DSM 15464 / FAM18), this protein is Fluoride-specific ion channel FluC.